The chain runs to 144 residues: D-aminoacyl-tRNA deacylase (144 aa).

The Gly-cisPro motif, important for rejection of L-amino acids signature appears at 137 to 138 (GP).

This sequence belongs to the DTD family. Homodimer.

Its subcellular location is the cytoplasm. It catalyses the reaction glycyl-tRNA(Ala) + H2O = tRNA(Ala) + glycine + H(+). The enzyme catalyses a D-aminoacyl-tRNA + H2O = a tRNA + a D-alpha-amino acid + H(+). Its function is as follows. An aminoacyl-tRNA editing enzyme that deacylates mischarged D-aminoacyl-tRNAs. Also deacylates mischarged glycyl-tRNA(Ala), protecting cells against glycine mischarging by AlaRS. Acts via tRNA-based rather than protein-based catalysis; rejects L-amino acids rather than detecting D-amino acids in the active site. By recycling D-aminoacyl-tRNA to D-amino acids and free tRNA molecules, this enzyme counteracts the toxicity associated with the formation of D-aminoacyl-tRNA entities in vivo and helps enforce protein L-homochirality. In Marinomonas sp. (strain MWYL1), this protein is D-aminoacyl-tRNA deacylase.